The primary structure comprises 181 residues: Phospholipase A2 inhibitor gamma subunit B (181 aa).

Intrachain disulfides connect C3–C27, C6–C13, C20–C48, C54–C75, C76–C81, C101–C126, C119–C146, and C152–C172.

Belongs to the CNF-like-inhibitor family. In terms of assembly, heterotrimer of 2 subunits A and 1 subunit B. Expressed by the liver.

The protein localises to the secreted. Its function is as follows. Strongly inhibits its own venom PLA2 and all other PLA2s tested including Elapid, Crotalid and Viperid venom PLA2s, as well as honeybee PLA2s. This chain is Phospholipase A2 inhibitor gamma subunit B, found in Laticauda semifasciata (Black-banded sea krait).